The following is a 645-amino-acid chain: Alkyldihydroxyacetonephosphate synthase, peroxisomal (645 aa).

Low complexity predominate over residues 1-10 (MAEAAAGEAG). The N-terminal 45 residues, 1-45 (MAEAAAGEAGASERDPDAGRARRRLRVLSGHLLGRPQEAPSTNEC), are a transit peptide targeting the peroxisome. Positions 1–72 (MAEAAAGEAG…AAPESGTIPK (72 aa)) are disordered. Basic and acidic residues predominate over residues 11–20 (ASERDPDAGR). The segment covering 50–69 (AASAAGASPAATPAAPESGT) has biased composition (low complexity). Phosphoserine occurs at positions 52 and 57. Thr-61 bears the Phosphothreonine mark. Lys-89 carries the N6-acetyllysine modification. The region spanning 189-371 (FERIPDIVVW…TEATIKIRPT (183 aa)) is the FAD-binding PCMH-type domain. FAD is bound by residues 221-227 (PIGGGTS), 290-296 (DSLEFST), and 303-306 (TRAS). Residue Lys-334 is modified to N6-acetyllysine. An FAD-binding site is contributed by 355-361 (EGTLGVI). Position 502 (Arg-502) interacts with substrate. The Proton donor/acceptor role is filled by Tyr-565. Important for enzyme activity stretches follow at residues 602 to 604 (HHH) and 641 to 645 (NRNLL).

Belongs to the FAD-binding oxidoreductase/transferase type 4 family. In terms of assembly, homodimer. Requires FAD as cofactor.

It localises to the peroxisome membrane. The protein localises to the peroxisome. It catalyses the reaction a long chain fatty alcohol + a 1-acylglycerone 3-phosphate = a 1-O-alkylglycerone 3-phosphate + a long-chain fatty acid + H(+). The catalysed reaction is hexadecan-1-ol + 1-hexadecanoylglycerone 3-phosphate = 1-O-hexadecylglycerone 3-phosphate + hexadecanoate + H(+). The enzyme catalyses 1-hexadecanoylglycerone 3-phosphate + a long-chain fatty acid = a 1-acylglycerone 3-phosphate + hexadecanoate. The protein operates within glycerolipid metabolism; ether lipid biosynthesis. Functionally, catalyzes the exchange of the acyl chain in acyl-dihydroxyacetonephosphate (acyl-DHAP) for a long chain fatty alcohol, yielding the first ether linked intermediate, i.e. alkyl-dihydroxyacetonephosphate (alkyl-DHAP), in the pathway of ether lipid biosynthesis. In Mus musculus (Mouse), this protein is Alkyldihydroxyacetonephosphate synthase, peroxisomal (Agps).